Here is a 444-residue protein sequence, read N- to C-terminus: F-box/FBD/LRR-repeat protein At5g53840 (444 aa).

The F-box domain occupies 17-63; it reads EERLSQLPDHLICVILSHLSTKDAVRTSILSTRWRNLWQLVPVLDFD. 11 LRR repeats span residues 103 to 123, 124 to 150, 151 to 171, 172 to 197, 199 to 224, 226 to 252, 273 to 299, 300 to 321, 322 to 347, 369 to 396, and 398 to 423; these read YYLT…IDIS, VFTC…KLSR, VTMV…DLDF, VNFT…TIVK, SEDN…RFDR, NGLV…EFIN, NRSM…TIKD, IFHY…LSAV, CSIS…SLKL, VSSL…YFLE, and STIL…HIRQ. Positions 356-408 constitute an FBD domain; that stretch reads EEVMSSTVPPPCLVSSLKFVKLESQLLGCGTELKVARYFLENSTILEKLTLKI.

This Arabidopsis thaliana (Mouse-ear cress) protein is F-box/FBD/LRR-repeat protein At5g53840.